A 119-amino-acid chain; its full sequence is Endocuticle structural glycoprotein SgAbd-3 (119 aa).

The residue at position 1 (Gln-1) is a Pyrrolidone carboxylic acid. The Chitin-binding type R&amp;R domain occupies 24–98 (DGSYRYSFET…PQGAHLPTPP (75 aa)). The disordered stretch occupies residues 33-55 (TSDGQRASQEGALKQVSAPGPDG). O-linked (HexNAc...) threonine glycosylation occurs at Thr-96.

Its function is as follows. Component of the abdominal endocuticle. This is Endocuticle structural glycoprotein SgAbd-3 from Schistocerca gregaria (Desert locust).